A 209-amino-acid chain; its full sequence is uncharacterized protein (209 aa).

Positions 1–19 are cleaved as a signal peptide; that stretch reads MGYFPYLAVFVCLLASGDA. N-linked (GlcNAc...) asparagine glycosylation is found at Asn41 and Asn109.

As to expression, component of the acid-soluble organic matrix of prismatic shell layers (at protein level).

The protein resides in the secreted. This is an uncharacterized protein from Haliotis asinina (Donkey's ear abalone).